A 482-amino-acid polypeptide reads, in one-letter code: tRNA sulfurtransferase (482 aa).

The 105-residue stretch at 61-165 folds into the THUMP domain; it reads LAIRDALTRI…DDRLLLIKGR (105 aa). Residues 183-184, K265, G287, and Q296 contribute to the ATP site; that span reads LI. C344 and C456 are disulfide-bonded. The Rhodanese domain maps to 404–482; it reads FGPNDVILDI…GFNNVKVYRP (79 aa). C456 serves as the catalytic Cysteine persulfide intermediate.

It belongs to the ThiI family.

The protein localises to the cytoplasm. The enzyme catalyses [ThiI sulfur-carrier protein]-S-sulfanyl-L-cysteine + a uridine in tRNA + 2 reduced [2Fe-2S]-[ferredoxin] + ATP + H(+) = [ThiI sulfur-carrier protein]-L-cysteine + a 4-thiouridine in tRNA + 2 oxidized [2Fe-2S]-[ferredoxin] + AMP + diphosphate. It catalyses the reaction [ThiS sulfur-carrier protein]-C-terminal Gly-Gly-AMP + S-sulfanyl-L-cysteinyl-[cysteine desulfurase] + AH2 = [ThiS sulfur-carrier protein]-C-terminal-Gly-aminoethanethioate + L-cysteinyl-[cysteine desulfurase] + A + AMP + 2 H(+). It participates in cofactor biosynthesis; thiamine diphosphate biosynthesis. In terms of biological role, catalyzes the ATP-dependent transfer of a sulfur to tRNA to produce 4-thiouridine in position 8 of tRNAs, which functions as a near-UV photosensor. Also catalyzes the transfer of sulfur to the sulfur carrier protein ThiS, forming ThiS-thiocarboxylate. This is a step in the synthesis of thiazole, in the thiamine biosynthesis pathway. The sulfur is donated as persulfide by IscS. The protein is tRNA sulfurtransferase of Escherichia coli O8 (strain IAI1).